The chain runs to 417 residues: NADH-quinone oxidoreductase subunit D (417 aa).

It belongs to the complex I 49 kDa subunit family. NDH-1 is composed of 14 different subunits. Subunits NuoB, C, D, E, F, and G constitute the peripheral sector of the complex.

Its subcellular location is the cell inner membrane. It carries out the reaction a quinone + NADH + 5 H(+)(in) = a quinol + NAD(+) + 4 H(+)(out). NDH-1 shuttles electrons from NADH, via FMN and iron-sulfur (Fe-S) centers, to quinones in the respiratory chain. The immediate electron acceptor for the enzyme in this species is believed to be ubiquinone. Couples the redox reaction to proton translocation (for every two electrons transferred, four hydrogen ions are translocated across the cytoplasmic membrane), and thus conserves the redox energy in a proton gradient. The polypeptide is NADH-quinone oxidoreductase subunit D (Halorhodospira halophila (strain DSM 244 / SL1) (Ectothiorhodospira halophila (strain DSM 244 / SL1))).